A 389-amino-acid chain; its full sequence is Arrestin-C (389 aa).

Belongs to the arrestin family. Retina and pineal gland.

In terms of biological role, may play a role in an as yet undefined retina-specific signal transduction. Could bind to photoactivated-phosphorylated red/green opsins. The protein is Arrestin-C (arr3) of Lithobates pipiens (Northern leopard frog).